A 329-amino-acid chain; its full sequence is NADH-quinone oxidoreductase subunit H (329 aa).

The next 9 helical transmembrane spans lie at L9–I29, G42–F62, F75–I95, I117–G137, I154–V174, G188–A208, L238–I258, W269–W291, and W309–I329.

This sequence belongs to the complex I subunit 1 family. As to quaternary structure, NDH-1 is composed of 14 different subunits. Subunits NuoA, H, J, K, L, M, N constitute the membrane sector of the complex.

Its subcellular location is the cell inner membrane. The catalysed reaction is a quinone + NADH + 5 H(+)(in) = a quinol + NAD(+) + 4 H(+)(out). In terms of biological role, NDH-1 shuttles electrons from NADH, via FMN and iron-sulfur (Fe-S) centers, to quinones in the respiratory chain. The immediate electron acceptor for the enzyme in this species is believed to be ubiquinone. Couples the redox reaction to proton translocation (for every two electrons transferred, four hydrogen ions are translocated across the cytoplasmic membrane), and thus conserves the redox energy in a proton gradient. This subunit may bind ubiquinone. In Helicobacter pylori (strain J99 / ATCC 700824) (Campylobacter pylori J99), this protein is NADH-quinone oxidoreductase subunit H.